The following is a 325-amino-acid chain: MKVSLVLLIAVFGLAMVAAEETLESKLQMALKSLLQENEELNLEGRDTKGGCERATNNCNGHGDCVQGRWGQYYCKCTLPYRVGGSESSCYMPKDKEEDVEIETKDTVARCERDTKNCDGHGTCQLSTFGRRTGQYICFCDAGYRKPNSYGGCSPSSARELEYLSYVARDVEMEMLARDSVYQCNRDTNSCDGFGKCEKSTFGRTTGQYICNCDDGYRNNAYGGCSPRTEREIEYLSMIARDQELEMQARDSLPQCNRDTNYCDGFGQCVKSTFGRTTGQYICSCNDGYENNLYGGCSPKDNEDEEVDTDRKMEILRSLANLLEE.

Residues 1–19 form the signal peptide; that stretch reads MKVSLVLLIAVFGLAMVAA. The propeptide occupies 20 to 45; it reads EETLESKLQMALKSLLQENEELNLEG. 2 consecutive EGF-like domains span residues 48–91 and 107–154; these read TKGG…SSCY and TVAR…GGCS. 6 disulfide bridges follow: Cys52–Cys65, Cys59–Cys75, Cys77–Cys90, Cys111–Cys124, Cys118–Cys138, and Cys140–Cys153. A propeptide spanning residues 160-177 is cleaved from the precursor; sequence ELEYLSYVARDVEMEMLA. The EGF-like 3 domain occupies 180-226; the sequence is SVYQCNRDTNSCDGFGKCEKSTFGRTTGQYICNCDDGYRNNAYGGCS. Disulfide bonds link Cys184–Cys197, Cys191–Cys211, and Cys213–Cys225. Positions 232 to 249 are excised as a propeptide; sequence EIEYLSMIARDQELEMQA. An EGF-like 4 domain is found at 252 to 298; it reads SLPQCNRDTNYCDGFGQCVKSTFGRTTGQYICSCNDGYENNLYGGCS. 3 cysteine pairs are disulfide-bonded: Cys256–Cys269, Cys263–Cys283, and Cys285–Cys297. Positions 313–325 are excised as a propeptide; it reads MEILRSLANLLEE.

Its subcellular location is the secreted. It localises to the extracellular space. The protein resides in the extracellular matrix. Its function is as follows. The EGIP peptides are factors effective to extrude the archenteron toward outside of embryos. May have a role in the induction of gastrulation. This chain is Exogastrula-inducing polypeptide, found in Heliocidaris crassispina (Sea urchin).